The chain runs to 215 residues: Putative O-methyltransferase MAB_1361c (215 aa).

S-adenosyl-L-methionine contacts are provided by residues Val42, Glu64, 66–67 (GT), Ser72, Asp90, and Val91. A substrate-binding site is contributed by Asp138.

Belongs to the class I-like SAM-binding methyltransferase superfamily. Cation-dependent O-methyltransferase family.

The protein is Putative O-methyltransferase MAB_1361c of Mycobacteroides abscessus (strain ATCC 19977 / DSM 44196 / CCUG 20993 / CIP 104536 / JCM 13569 / NCTC 13031 / TMC 1543 / L948) (Mycobacterium abscessus).